The chain runs to 653 residues: Thioredoxin domain-containing protein 3 homolog (653 aa).

Positions 9 to 114 (LQETLNTQEA…QETIQETLKN (106 aa)) constitute a Thioredoxin domain. Cysteines 38 and 41 form a disulfide. An NDK 1 region spans residues 155–299 (KQITVALIKP…FFFPDFKPPT (145 aa)). Residues 300–323 (YRSAKSAASRASGRRSKTPSQKPR) are disordered. A compositionally biased stretch (low complexity) spans 301–310 (RSAKSAASRA). 2 NDK regions span residues 324–459 (LQRT…IFHV) and 459–597 (VEQT…QFDW). The interval 603–653 (QAEEGEVNETSGEQPTDEQSGETEKTEEDGEHEGAQSDQQQAVSEAMEKEE) is disordered. The span at 617–633 (PTDEQSGETEKTEEDGE) shows a compositional bias: acidic residues.

In the C-terminal section; belongs to the NDK family. As to expression, testis-specific.

Its function is as follows. May be required during the final stages of sperm tail maturation. May act by reducing disulfide bonds within the sperm components. This is Thioredoxin domain-containing protein 3 homolog (CiIC3) from Ciona intestinalis (Transparent sea squirt).